Here is a 62-residue protein sequence, read N- to C-terminus: Large ribosomal subunit protein bL32 (62 aa).

A compositionally biased stretch (basic residues) spans 1–16; that stretch reads MAVPKRKTSPSRRGMR. The tract at residues 1–44 is disordered; the sequence is MAVPKRKTSPSRRGMRRSADALKAPTYVEDKDSGELRRPHHIDL. Positions 28–44 are enriched in basic and acidic residues; the sequence is VEDKDSGELRRPHHIDL.

The protein belongs to the bacterial ribosomal protein bL32 family.

In Methylorubrum extorquens (strain CM4 / NCIMB 13688) (Methylobacterium extorquens), this protein is Large ribosomal subunit protein bL32.